Consider the following 646-residue polypeptide: Threonine--tRNA ligase (646 aa).

The TGS domain occupies Met1–Thr63. The segment at Asp247 to Pro544 is catalytic. Zn(2+) is bound by residues Cys344, His395, and His521.

It belongs to the class-II aminoacyl-tRNA synthetase family. Homodimer. Zn(2+) is required as a cofactor.

Its subcellular location is the cytoplasm. It catalyses the reaction tRNA(Thr) + L-threonine + ATP = L-threonyl-tRNA(Thr) + AMP + diphosphate + H(+). Catalyzes the attachment of threonine to tRNA(Thr) in a two-step reaction: L-threonine is first activated by ATP to form Thr-AMP and then transferred to the acceptor end of tRNA(Thr). Also edits incorrectly charged L-seryl-tRNA(Thr). The protein is Threonine--tRNA ligase of Cereibacter sphaeroides (strain ATCC 17023 / DSM 158 / JCM 6121 / CCUG 31486 / LMG 2827 / NBRC 12203 / NCIMB 8253 / ATH 2.4.1.) (Rhodobacter sphaeroides).